Here is a 157-residue protein sequence, read N- to C-terminus: Crossover junction endodeoxyribonuclease RuvC (157 aa).

Active-site residues include D7, E66, and D139. Residues D7, E66, and D139 each contribute to the Mg(2+) site.

Belongs to the RuvC family. Homodimer which binds Holliday junction (HJ) DNA. The HJ becomes 2-fold symmetrical on binding to RuvC with unstacked arms; it has a different conformation from HJ DNA in complex with RuvA. In the full resolvosome a probable DNA-RuvA(4)-RuvB(12)-RuvC(2) complex forms which resolves the HJ. Mg(2+) serves as cofactor.

The protein resides in the cytoplasm. It catalyses the reaction Endonucleolytic cleavage at a junction such as a reciprocal single-stranded crossover between two homologous DNA duplexes (Holliday junction).. The RuvA-RuvB-RuvC complex processes Holliday junction (HJ) DNA during genetic recombination and DNA repair. Endonuclease that resolves HJ intermediates. Cleaves cruciform DNA by making single-stranded nicks across the HJ at symmetrical positions within the homologous arms, yielding a 5'-phosphate and a 3'-hydroxyl group; requires a central core of homology in the junction. The consensus cleavage sequence is 5'-(A/T)TT(C/G)-3'. Cleavage occurs on the 3'-side of the TT dinucleotide at the point of strand exchange. HJ branch migration catalyzed by RuvA-RuvB allows RuvC to scan DNA until it finds its consensus sequence, where it cleaves and resolves the cruciform DNA. This Helicobacter pylori (strain ATCC 700392 / 26695) (Campylobacter pylori) protein is Crossover junction endodeoxyribonuclease RuvC.